The following is a 296-amino-acid chain: Urease accessory protein UreD (296 aa).

It belongs to the UreD family. In terms of assembly, ureD, UreF and UreG form a complex that acts as a GTP-hydrolysis-dependent molecular chaperone, activating the urease apoprotein by helping to assemble the nickel containing metallocenter of UreC. The UreE protein probably delivers the nickel.

The protein localises to the cytoplasm. Required for maturation of urease via the functional incorporation of the urease nickel metallocenter. The polypeptide is Urease accessory protein UreD (Methylibium petroleiphilum (strain ATCC BAA-1232 / LMG 22953 / PM1)).